Here is a 940-residue protein sequence, read N- to C-terminus: Protein translocase subunit SecA (940 aa).

ATP contacts are provided by residues glutamine 85, 103–107 (GEGKT), and aspartate 505. A disordered region spans residues 851–940 (PVQDGAERPS…KGGGGRRRKK (90 aa)). Basic and acidic residues predominate over residues 855-865 (GAERPSLEKEG). Positions 928 to 940 (RRRKGGGGRRRKK) are enriched in basic residues.

It belongs to the SecA family. In terms of assembly, monomer and homodimer. Part of the essential Sec protein translocation apparatus which comprises SecA, SecYEG and auxiliary proteins SecDF. Other proteins may also be involved.

The protein localises to the cell membrane. The protein resides in the cytoplasm. It carries out the reaction ATP + H2O + cellular proteinSide 1 = ADP + phosphate + cellular proteinSide 2.. Part of the Sec protein translocase complex. Interacts with the SecYEG preprotein conducting channel. Has a central role in coupling the hydrolysis of ATP to the transfer of proteins into and across the cell membrane, serving as an ATP-driven molecular motor driving the stepwise translocation of polypeptide chains across the membrane. In Streptomyces griseus, this protein is Protein translocase subunit SecA.